A 641-amino-acid polypeptide reads, in one-letter code: Chaperone protein DnaK 2 (641 aa).

T199 bears the Phosphothreonine; by autocatalysis mark. Positions 601–616 (MAQQQAQAQHAQSSQQ) are enriched in low complexity. The segment at 601–641 (MAQQQAQAQHAQSSQQTNDTTGQSSTDDDVFEAEFEEVKDK) is disordered. Over residues 626–635 (TDDDVFEAEF) the composition is skewed to acidic residues.

The protein belongs to the heat shock protein 70 family.

Functionally, acts as a chaperone. This Photobacterium profundum (strain SS9) protein is Chaperone protein DnaK 2.